Here is a 380-residue protein sequence, read N- to C-terminus: Ribosomal RNA large subunit methyltransferase G (380 aa).

The protein belongs to the methyltransferase superfamily. RlmG family.

The protein resides in the cytoplasm. The enzyme catalyses guanosine(1835) in 23S rRNA + S-adenosyl-L-methionine = N(2)-methylguanosine(1835) in 23S rRNA + S-adenosyl-L-homocysteine + H(+). Specifically methylates the guanine in position 1835 (m2G1835) of 23S rRNA. The protein is Ribosomal RNA large subunit methyltransferase G of Streptomyces avermitilis (strain ATCC 31267 / DSM 46492 / JCM 5070 / NBRC 14893 / NCIMB 12804 / NRRL 8165 / MA-4680).